A 517-amino-acid polypeptide reads, in one-letter code: Crotonobetaine/carnitine--CoA ligase (517 aa).

The protein belongs to the ATP-dependent AMP-binding enzyme family.

It catalyses the reaction 4-(trimethylamino)butanoate + ATP + CoA = 4-(trimethylamino)butanoyl-CoA + AMP + diphosphate. The enzyme catalyses crotonobetaine + ATP + CoA = crotonobetainyl-CoA + AMP + diphosphate. The catalysed reaction is (R)-carnitine + ATP + CoA = (R)-carnitinyl-CoA + AMP + diphosphate. Its pathway is amine and polyamine metabolism; carnitine metabolism. Its function is as follows. Catalyzes the transfer of CoA to carnitine, generating the initial carnitinyl-CoA needed for the CaiB reaction cycle. Also has activity toward crotonobetaine and gamma-butyrobetaine. This chain is Crotonobetaine/carnitine--CoA ligase, found in Escherichia coli O45:K1 (strain S88 / ExPEC).